Reading from the N-terminus, the 115-residue chain is Putative septation protein SpoVG (115 aa).

The tract at residues 88–115 is disordered; it reads PGTIATSEVSSQLEESDSDKTLSEDLKA. Over residues 91–100 the composition is skewed to polar residues; it reads IATSEVSSQL. Residues 105–115 show a composition bias toward basic and acidic residues; that stretch reads SDKTLSEDLKA.

The protein belongs to the SpoVG family.

In terms of biological role, could be involved in septation. The chain is Putative septation protein SpoVG from Macrococcus caseolyticus (strain JCSC5402) (Macrococcoides caseolyticum).